We begin with the raw amino-acid sequence, 69 residues long: Putative membrane protein insertion efficiency factor (69 aa).

The protein belongs to the UPF0161 family.

It is found in the cell inner membrane. Functionally, could be involved in insertion of integral membrane proteins into the membrane. The protein is Putative membrane protein insertion efficiency factor of Syntrophotalea carbinolica (strain DSM 2380 / NBRC 103641 / GraBd1) (Pelobacter carbinolicus).